An 876-amino-acid polypeptide reads, in one-letter code: Leucine--tRNA ligase (876 aa).

A 'HIGH' region motif is present at residues 43–53; it reads PYPSGRIHMGH. The 'KMSKS' region motif lies at 632–636; it reads KMSKS. An ATP-binding site is contributed by lysine 635.

Belongs to the class-I aminoacyl-tRNA synthetase family.

Its subcellular location is the cytoplasm. It catalyses the reaction tRNA(Leu) + L-leucine + ATP = L-leucyl-tRNA(Leu) + AMP + diphosphate. This chain is Leucine--tRNA ligase, found in Sinorhizobium medicae (strain WSM419) (Ensifer medicae).